The primary structure comprises 294 residues: Elongation factor Ts (294 aa).

The involved in Mg(2+) ion dislocation from EF-Tu stretch occupies residues 81–84; sequence TDFV.

This sequence belongs to the EF-Ts family.

The protein localises to the cytoplasm. Functionally, associates with the EF-Tu.GDP complex and induces the exchange of GDP to GTP. It remains bound to the aminoacyl-tRNA.EF-Tu.GTP complex up to the GTP hydrolysis stage on the ribosome. The protein is Elongation factor Ts of Levilactobacillus brevis (strain ATCC 367 / BCRC 12310 / CIP 105137 / JCM 1170 / LMG 11437 / NCIMB 947 / NCTC 947) (Lactobacillus brevis).